The primary structure comprises 334 residues: Phospho-N-acetylmuramoyl-pentapeptide-transferase (334 aa).

10 consecutive transmembrane segments (helical) span residues 11–31 (GAGL…IPLM), 55–75 (PTMG…IFAP), 84–104 (LIIA…DDYI), 124–144 (VGLA…GTAV), 158–178 (PLYY…VNFA), 184–204 (LLGG…ALAL), 205–225 (GQTD…GFLH), 233–253 (IFMG…LAVL), 258–278 (FLLV…ILQV), and 311–331 (LFWG…PGML).

Belongs to the glycosyltransferase 4 family. MraY subfamily. It depends on Mg(2+) as a cofactor.

The protein resides in the cell membrane. It catalyses the reaction UDP-N-acetyl-alpha-D-muramoyl-L-alanyl-gamma-D-glutamyl-meso-2,6-diaminopimeloyl-D-alanyl-D-alanine + di-trans,octa-cis-undecaprenyl phosphate = di-trans,octa-cis-undecaprenyl diphospho-N-acetyl-alpha-D-muramoyl-L-alanyl-D-glutamyl-meso-2,6-diaminopimeloyl-D-alanyl-D-alanine + UMP. It participates in cell wall biogenesis; peptidoglycan biosynthesis. Catalyzes the initial step of the lipid cycle reactions in the biosynthesis of the cell wall peptidoglycan: transfers peptidoglycan precursor phospho-MurNAc-pentapeptide from UDP-MurNAc-pentapeptide onto the lipid carrier undecaprenyl phosphate, yielding undecaprenyl-pyrophosphoryl-MurNAc-pentapeptide, known as lipid I. The polypeptide is Phospho-N-acetylmuramoyl-pentapeptide-transferase (Symbiobacterium thermophilum (strain DSM 24528 / JCM 14929 / IAM 14863 / T)).